A 370-amino-acid polypeptide reads, in one-letter code: Homospermidine synthase 2 (370 aa).

It belongs to the deoxyhypusine synthase family. As to quaternary structure, homotetramer. NAD(+) serves as cofactor. In terms of processing, the N-terminus is blocked. In terms of tissue distribution, expressed in roots.

The catalysed reaction is putrescine + spermidine = sym-homospermidine + propane-1,3-diamine. It functions in the pathway alkaloid biosynthesis; pyrrolizidine alkaloid biosynthesis. Its function is as follows. Catalyzes the transfer of an aminobutyl unit from spermidine onto putrescine. The resulting polyamine homospermidine is a precursor in the biosynthesis of pyrrolizidine alkaloids. The polypeptide is Homospermidine synthase 2 (Senecio vernalis (Spring groundsel)).